The primary structure comprises 333 residues: Holliday junction branch migration complex subunit RuvB (333 aa).

The large ATPase domain (RuvB-L) stretch occupies residues Met1–Tyr182. ATP is bound by residues Leu21, Arg22, Gly63, Lys66, Thr67, Thr68, Glu129–Phe131, Arg172, Tyr182, and Arg219. Thr67 is a binding site for Mg(2+). The segment at Thr183–Gln253 is small ATPAse domain (RuvB-S). Residues Lys256–Val333 are head domain (RuvB-H). DNA is bound by residues Arg311 and Arg316.

Belongs to the RuvB family. As to quaternary structure, homohexamer. Forms an RuvA(8)-RuvB(12)-Holliday junction (HJ) complex. HJ DNA is sandwiched between 2 RuvA tetramers; dsDNA enters through RuvA and exits via RuvB. An RuvB hexamer assembles on each DNA strand where it exits the tetramer. Each RuvB hexamer is contacted by two RuvA subunits (via domain III) on 2 adjacent RuvB subunits; this complex drives branch migration. In the full resolvosome a probable DNA-RuvA(4)-RuvB(12)-RuvC(2) complex forms which resolves the HJ.

The protein resides in the cytoplasm. It carries out the reaction ATP + H2O = ADP + phosphate + H(+). Its function is as follows. The RuvA-RuvB-RuvC complex processes Holliday junction (HJ) DNA during genetic recombination and DNA repair, while the RuvA-RuvB complex plays an important role in the rescue of blocked DNA replication forks via replication fork reversal (RFR). RuvA specifically binds to HJ cruciform DNA, conferring on it an open structure. The RuvB hexamer acts as an ATP-dependent pump, pulling dsDNA into and through the RuvAB complex. RuvB forms 2 homohexamers on either side of HJ DNA bound by 1 or 2 RuvA tetramers; 4 subunits per hexamer contact DNA at a time. Coordinated motions by a converter formed by DNA-disengaged RuvB subunits stimulates ATP hydrolysis and nucleotide exchange. Immobilization of the converter enables RuvB to convert the ATP-contained energy into a lever motion, pulling 2 nucleotides of DNA out of the RuvA tetramer per ATP hydrolyzed, thus driving DNA branch migration. The RuvB motors rotate together with the DNA substrate, which together with the progressing nucleotide cycle form the mechanistic basis for DNA recombination by continuous HJ branch migration. Branch migration allows RuvC to scan DNA until it finds its consensus sequence, where it cleaves and resolves cruciform DNA. This Bacillus cereus (strain 03BB102) protein is Holliday junction branch migration complex subunit RuvB.